A 343-amino-acid chain; its full sequence is C-X-C chemokine receptor type 6 (343 aa).

Over 1–33 (MAEYDHYEDDEFFNSFNDSSQKEHQDFLQFSKV) the chain is Extracellular. Residue N17 is glycosylated (N-linked (GlcNAc...) asparagine). The chain crosses the membrane as a helical span at residues 34–60 (FLPCMYLVVFVCGLVGNSLVLVISIFY). The Cytoplasmic segment spans residues 61 to 69 (HKLQSLTDV). A helical transmembrane segment spans residues 70–90 (FLVNLPLADLVFVCTLPFWAY). Residues 91-104 (AGIHEWIFGQVMCK) are Extracellular-facing. A disulfide bridge connects residues C103 and C181. A helical membrane pass occupies residues 105-126 (TLLGVYTINFYTSMLILTCITV). Topologically, residues 127 to 144 (DRFIVVVKATKAYNQQAK) are cytoplasmic. The helical transmembrane segment at 145-165 (RMTWGKVICLLIWVISLLVSL) threads the bilayer. Residues 166–188 (PQIIYGNVFNLDKLICRYHDEEI) lie on the Extracellular side of the membrane. A helical transmembrane segment spans residues 189–216 (STVVLATQMTLGFFLPLLTMIVCYSVII). Over 217–232 (KTLLHAGGFQKHRSLK) the chain is Cytoplasmic. A helical membrane pass occupies residues 233-260 (IIFLVMAVFLLTQTPFNLVKLIRSTHWE). Over 261–276 (YYAMTSFHYTIIVTEA) the chain is Extracellular. The helical transmembrane segment at 277-294 (IAYLRACLNPVLYAFVSL) threads the bilayer. Residues 295-343 (KFRKNFWKLVKDIGCLPYLGVSHQWKSSEDNSKTFSASHNVEATSMFQL) are Cytoplasmic-facing.

This sequence belongs to the G-protein coupled receptor 1 family.

It localises to the cell membrane. Functionally, receptor for the C-X-C chemokine CXCL16. Used as a coreceptor by SIVs and by strains of HIV-2 and m-tropic HIV-1. This Cercocebus atys (Sooty mangabey) protein is C-X-C chemokine receptor type 6 (CXCR6).